Reading from the N-terminus, the 338-residue chain is DNA-directed RNA polymerase subunit alpha (338 aa).

A compositionally biased stretch (polar residues) spans 1–10 (MIQKNWQTLE). Positions 1-24 (MIQKNWQTLEKPSKLDITPGSDPK) are disordered. The segment at 1 to 234 (MIQKNWQTLE…DQLQMFINFE (234 aa)) is alpha N-terminal domain (alpha-NTD). The interval 250-338 (FNKNLLRKVD…DLAKRLEEPY (89 aa)) is alpha C-terminal domain (alpha-CTD).

It belongs to the RNA polymerase alpha chain family. Homodimer. The RNAP catalytic core consists of 2 alpha, 1 beta, 1 beta' and 1 omega subunit. When a sigma factor is associated with the core the holoenzyme is formed, which can initiate transcription.

The enzyme catalyses RNA(n) + a ribonucleoside 5'-triphosphate = RNA(n+1) + diphosphate. DNA-dependent RNA polymerase catalyzes the transcription of DNA into RNA using the four ribonucleoside triphosphates as substrates. The chain is DNA-directed RNA polymerase subunit alpha from Rhodospirillum centenum (strain ATCC 51521 / SW).